The primary structure comprises 204 residues: Phosphoribosyl-dephospho-CoA transferase (204 aa).

Catalysis depends on residues Asp129 and Asp131.

The protein belongs to the MdcG family.

The catalysed reaction is apo-[malonate decarboxylase ACP] + 2'-(5''-triphospho-alpha-D-ribosyl)-3'-dephospho-CoA = holo-[malonate decarboxylase ACP] + diphosphate. Transfers 2'-(5-triphosphoribosyl)-3'-dephosphocoenzyme-A to the apo-[acyl-carrier-protein] of the malonate decarboxylase to yield holo-[acyl-carrier-protein]. The sequence is that of Phosphoribosyl-dephospho-CoA transferase from Pseudomonas putida (strain GB-1).